Consider the following 501-residue polypeptide: MQPVLELKGISKSFPGVKALSGAALRVYPGKVMALVGENGAGKSTMMKVLTGIYTRDTGTVHYLGKEVIFSGPRSSQEAGIGIIHQELNLIPQLTIAENIFLGREFVNKFGAIDWRKMYQEADRLLKKLNLSYSSHRLVAELSIGDQQMVEIAKVLSFKSKVIIMDEPTDALTDTETESLFRVIYELKSQRCGIVYISHRLREIFEICDDVTVFRDGQFIGEKSVKELKEETLIEMMVGRKLEDQYPRLNLPRGKKRLEVKQISGPGVTNASFSLYSGEILGISGLMGAGRTELMKIIYGALPKTQGQITLDGTPIVIRNPQDGLACGIVYISEDRKRDGLVLGMSIKDNMSLTALRYFSNRLGGLNHKEEQNAVSDFIKLFSIKTPSMGQVIGLLSGGNQQKVAIARGLMTRPKVLILDEPTRGVDVGAKKEIYQLINQFKKEGLSIILVSSEMPEVIGMSDRILVMCEGQISGEFFAEQATQEILMAAAVGKQYGAIQE.

2 ABC transporter domains span residues 5 to 241 and 249 to 495; these read LELK…VGRK and LNLP…VGKQ. 37-44 lines the ATP pocket; it reads GENGAGKS.

Belongs to the ABC transporter superfamily. Ribose importer (TC 3.A.1.2.1) family. As to quaternary structure, the complex is composed of an ATP-binding protein (RbsA), two transmembrane proteins (RbsC) and a solute-binding protein (RbsB).

It localises to the cell inner membrane. The enzyme catalyses D-ribose(out) + ATP + H2O = D-ribose(in) + ADP + phosphate + H(+). In terms of biological role, part of the ABC transporter complex RbsABC involved in ribose import. Responsible for energy coupling to the transport system. This Photorhabdus laumondii subsp. laumondii (strain DSM 15139 / CIP 105565 / TT01) (Photorhabdus luminescens subsp. laumondii) protein is Ribose import ATP-binding protein RbsA.